Reading from the N-terminus, the 382-residue chain is Telomere-binding protein OPG082 (382 aa).

It belongs to the orthopoxvirus OPG082 family.

The protein localises to the virion. Functionally, binds to the hairpin form of the viral telomeric sequence. Might direct genome encapsidation into the virus particle. This Variola virus (isolate Human/India/Ind3/1967) (VARV) protein is Telomere-binding protein OPG082 (OPG082).